The chain runs to 424 residues: Dihydroorotase-like protein (424 aa).

It belongs to the metallo-dependent hydrolases superfamily. DHOase family. PyrC' subfamily. In terms of assembly, heterododecamer of 6 active PyrB subunits and 6 non-catalytic PyrC' subunits.

Its function is as follows. Non-functional DHOase. The protein is Dihydroorotase-like protein of Pseudomonas putida (Arthrobacter siderocapsulatus).